A 947-amino-acid chain; its full sequence is Serine-aspartate repeat-containing protein C (947 aa).

The first 50 residues, 1 to 50, serve as a signal peptide directing secretion; that stretch reads MNNKKTATNRKGMIPNRLNKFSIRKYSVGTASILVGTTLIFGLSGHEAKA. The YSIRK-G/S signaling motif motif lies at 21–32; that stretch reads FSIRKYSVGTAS. The tract at residues 51 to 164 is disordered; that stretch reads AEHTNGELNQ…STTPKTTTIK (114 aa). The segment at 51–495 is ligand binding A region; the sequence is AEHTNGELNQ…GSSTANGDQK (445 aa). Positions 56–71 are enriched in polar residues; that stretch reads GELNQSKNETTAPSEN. Positions 72 to 83 are enriched in basic and acidic residues; it reads KTTKKVDSRQLK. Residues 84-155 show a composition bias toward polar residues; that stretch reads DNTQTATADQ…SNLTQAKDVS (72 aa). CNA-B domains lie at 496–606 and 607–717; these read KYNL…YKTP and KYSL…EEET. The segment at 678–927 is disordered; sequence TQTGTNTTED…NNSNNGTLFG (250 aa). Composition is skewed to acidic residues over residues 685-695 and 712-886; these read TEDDKDADGGE and YYEE…DSDS. The short motif at 910-914 is the LPXTG sorting signal element; that stretch reads LPETG. Positions 912–927 are enriched in low complexity; that stretch reads ETGSENNNSNNGTLFG. Residue Thr913 is modified to Pentaglycyl murein peptidoglycan amidated threonine. Positions 914-947 are cleaved as a propeptide — removed by sortase; the sequence is GSENNNSNNGTLFGGLFAALGSLLLFGRRKKQNK.

Belongs to the serine-aspartate repeat-containing protein (SDr) family. As to quaternary structure, homodimerizes; via N2-Domain. Interacts with host NRXN1; this interaction mediates bacterial attachment to host cells.

Its subcellular location is the secreted. It localises to the cell wall. Its function is as follows. Cell surface-associated calcium-binding protein which plays an important role in adhesion and pathogenesis. Mediates interactions with components of the extracellular matrix such as host NRXN1 to promote bacterial adhesion. This is Serine-aspartate repeat-containing protein C (sdrC) from Staphylococcus aureus (strain Newman).